Consider the following 156-residue polypeptide: Bursicon (156 aa).

An N-terminal signal peptide occupies residues 1 to 26 (MYALDFLFIAFVYFAACHIQEKPVRA). 5 disulfide bridges follow: Cys-37-Cys-86, Cys-51-Cys-100, Cys-61-Cys-121, Cys-65-Cys-123, and Cys-83-Cys-126. The region spanning 37-127 (CQMTPVIHIL…PLECMCRPCG (91 aa)) is the CTCK domain.

As to quaternary structure, heterodimer of burs and pburs.

Its subcellular location is the secreted. Functionally, final heterodimeric neurohormone released at the end of the molting cycle, involved in the sclerotization (tanning) of the insect cuticle, melanization and wing spreading. In Manduca sexta (Tobacco hawkmoth), this protein is Bursicon.